Reading from the N-terminus, the 683-residue chain is MALLGRLLPLALALALGPAATPAGPARSPYQLVLQHSRLRGRQHGPNVCAVQKLIGTNKKYFTNCKQWYQRKICGKSTVISYECCPGYEKVPGEKGCPAALPLSNLYETLGVVGATTTQLYTDRTEKLRPEMEGPGSFTIFAPSNEAWSSLPAEVLDSLVSNVNIELLNALRYHMVDRRVLTDELKHGMALTSMYQNSNIQIHHYPNGIVTVNCARLLKADHHATNGVVHLIDKVISTVTNNIQQIIEIEDTFETLRAAVAASGLNTLLEGDGQYTLLAPTNEAFEKIPAETLNRILGDPEALRDLLNNHILKSAMCAEAIVAGLSLETLEGTTLEVGCSGDMLTINGKPIISNKDVLATNGVIHFIDELLIPDSAKTLFELAADSDVSTAIDLFRQAGLSSHLSGNERLTLLAPMNSVFKDGTPPINARTKNLLLNHMIKDQLASKYLYHGQTLDTLGGRKLRVFVYRNSLCIENSCIAAHDKRGRYGTLFTMDRMLTPPMGTVMDVLKGDNRFSMLVAAIQSAGLTETLNREGVYTVFAPTNEAFQALPRGELNKLMGNAKELANILKYHVGDEILVSGGIGALVRLKSLQGDKLEVSSKNNVVSVNKEPVAEVDIMATNGVVHAISSVLQPPANRPQERGDELADSALEIFKQASAFSRATQSSVKLAPVYQRLLERMKH.

A signal peptide spans 1–23; sequence MALLGRLLPLALALALGPAATPA. Residue Ser37 is modified to Phosphoserine. Residues 45–99 form the EMI domain; sequence GPNVCAVQKLIGTNKKYFTNCKQWYQRKICGKSTVISYECCPGYEKVPGEKGCPA. 5 disulfides stabilise this stretch: Cys49–Cys85, Cys74–Cys339, Cys84–Cys97, Cys214–Cys317, and Cys473–Cys478. S-cysteinyl cysteine is present on Cys65. FAS1 domains follow at residues 103–236, 240–371, 375–498, and 502–632; these read LSNL…DKVI, TNNI…DELL, SAKT…DRML, and MGTV…SSVL. The short motif at 642–644 is the Cell attachment site element; it reads RGD.

As to quaternary structure, binds to type I, II, and IV collagens. Post-translationally, gamma-carboxylation is controversial. Gamma-carboxyglutamated; gamma-carboxyglutamate residues are formed by vitamin K dependent carboxylation; this may be required for calcium binding. According to a more recent report, does not contain vitamin K-dependent gamma-carboxyglutamate residues. The EMI domain contains 2 expected intradomain disulfide bridges (Cys-49-Cys85 and Cys-84-Cys-97) and one unusual interdomain disulfide bridge to the second FAS1 domain (Cys-74-Cys-339). This arrangement violates the predicted disulfide bridge pattern of an EMI domain.

It localises to the secreted. The protein resides in the extracellular space. The protein localises to the extracellular matrix. In terms of biological role, plays a role in cell adhesion. May play a role in cell-collagen interactions. In Bos taurus (Bovine), this protein is Transforming growth factor-beta-induced protein ig-h3 (TGFBI).